A 243-amino-acid chain; its full sequence is Terpene cyclase paxB (243 aa).

The next 7 membrane-spanning stretches (helical) occupy residues 23–43 (FVVG…YISF), 49–69 (GMSI…CLVF), 78–98 (GVFW…ITFS), 112–132 (ISLI…ALAL), 134–154 (IGPA…LSVG), 172–194 (LWAS…WMYW), and 205–225 (LVLW…ICFW).

It belongs to the paxB family.

The protein localises to the membrane. It functions in the pathway secondary metabolite biosynthesis. Its function is as follows. Terpene cyclase; part of the ATM2 gene cluster that mediates the biosynthesis of paxilline, a mycotoxin that acts as an inhibitor of mammalian maxi-K channels. PaxG, the geranylgeranyl diphosphate (GGPP) synthase is proposed to catalyze the first step in paxilline biosynthesis. Condensation of indole-3-glycerol phosphate with GGPP by paxC then forms 3-geranylgeranylindole (3-GGI), followed by epoxidation and cyclization of this intermediate (by paxM and paxB) to form paspaline. Paspaline is subsequently converted to 13-desoxypaxilline by paxP, the latter being then converted to paxilline by paxQ. Finally paxilline can be mono- and di-prenylated by paxD. The chain is Terpene cyclase paxB from Penicillium paxilli.